Reading from the N-terminus, the 84-residue chain is Sec-independent protein translocase protein TatA (84 aa).

The chain crosses the membrane as a helical span at residues 1 to 21 (MGGISIWQLLIIAVIVILLFG). Positions 40–84 (KKAMSDEDKPADKKDADFEPKNIEQQKTEASAETTAETKKDKEQA) are disordered. Basic and acidic residues-rich tracts occupy residues 42 to 66 (AMSD…EQQK) and 75 to 84 (AETKKDKEQA).

This sequence belongs to the TatA/E family. The Tat system comprises two distinct complexes: a TatABC complex, containing multiple copies of TatA, TatB and TatC subunits, and a separate TatA complex, containing only TatA subunits. Substrates initially bind to the TatABC complex, which probably triggers association of the separate TatA complex to form the active translocon.

It is found in the cell inner membrane. Part of the twin-arginine translocation (Tat) system that transports large folded proteins containing a characteristic twin-arginine motif in their signal peptide across membranes. TatA could form the protein-conducting channel of the Tat system. This Vibrio atlanticus (strain LGP32) (Vibrio splendidus (strain Mel32)) protein is Sec-independent protein translocase protein TatA.